The following is a 359-amino-acid chain: Ferredoxin--NADP reductase (359 aa).

FAD is bound by residues Asp48, Gln56, Tyr61, Ala101, Phe139, Asp304, and Ser345.

It belongs to the ferredoxin--NADP reductase type 2 family. Homodimer. FAD is required as a cofactor.

The catalysed reaction is 2 reduced [2Fe-2S]-[ferredoxin] + NADP(+) + H(+) = 2 oxidized [2Fe-2S]-[ferredoxin] + NADPH. The protein is Ferredoxin--NADP reductase of Ralstonia pickettii (strain 12J).